The sequence spans 410 residues: Sporulation killing factor maturation protein SkfB (410 aa).

The Radical SAM core domain maps to 103-314 (SYLPISCTLQ…LREARHKWGD (212 aa)). The [4Fe-4S] cluster site is built by cysteine 117, cysteine 121, cysteine 124, cysteine 380, cysteine 385, and cysteine 387.

This sequence belongs to the radical SAM superfamily. [4Fe-4S] cluster is required as a cofactor.

Its subcellular location is the cytoplasm. Catalyzes the formation of the thioether bond required for production of the sporulation killing factor (SKF) from SkfA. Forms the cysteine-methionine thioether bond found in SKF; the acceptor amino acid can be hydrophobic, aromatic or a small hydrophilic amino acid but not a larger hydrophilic amino acid, i.e. Met=Ala, Phe, Leu, Tyr&gt;Asn, Ser&gt;&gt;Gln, Glu, Lys. The relative position of Cys and Met in the substrate cannot be inverted, in vitro the thioether bond cannot be made in the absence of the SkfA propeptide, suggesting this is the first reaction in SKF maturation. In vitro, in the absence of a second substrate, cleaves S-adenosyl-L-methionine into Met and 5'-dA. The sequence is that of Sporulation killing factor maturation protein SkfB from Bacillus subtilis (strain 168).